We begin with the raw amino-acid sequence, 96 residues long: Co-chaperonin GroES (96 aa).

Belongs to the GroES chaperonin family. Heptamer of 7 subunits arranged in a ring. Interacts with the chaperonin GroEL.

It is found in the cytoplasm. In terms of biological role, together with the chaperonin GroEL, plays an essential role in assisting protein folding. The GroEL-GroES system forms a nano-cage that allows encapsulation of the non-native substrate proteins and provides a physical environment optimized to promote and accelerate protein folding. GroES binds to the apical surface of the GroEL ring, thereby capping the opening of the GroEL channel. In Colwellia maris, this protein is Co-chaperonin GroES.